A 434-amino-acid polypeptide reads, in one-letter code: Mitochondrial distribution and morphology protein 12 (434 aa).

Positions 1-434 (MSIDIDWERA…VYPSFWTFLV (434 aa)) constitute an SMP-LTD domain. Positions 70 to 83 (YEEDDNENFSESSE) are enriched in acidic residues. Disordered regions lie at residues 70-141 (YEED…LRSP) and 181-275 (TPLG…DDLP). Positions 86 to 97 (SPTREPVDRYGS) are enriched in basic and acidic residues. The span at 215 to 237 (SAQSRPSTANTGNTLLSRGSMSS) shows a compositional bias: polar residues.

This sequence belongs to the MDM12 family. Component of the ER-mitochondria encounter structure (ERMES) or MDM complex, composed of MMM1, MDM10, MDM12 and MDM34. An MMM1 homodimer associates with one molecule of MDM12 on each side in a pairwise head-to-tail manner, and the SMP-LTD domains of MMM1 and MDM12 generate a continuous hydrophobic tunnel for phospholipid trafficking.

It is found in the mitochondrion outer membrane. It localises to the endoplasmic reticulum membrane. Functionally, component of the ERMES/MDM complex, which serves as a molecular tether to connect the endoplasmic reticulum (ER) and mitochondria. Components of this complex are involved in the control of mitochondrial shape and protein biogenesis, and function in nonvesicular lipid trafficking between the ER and mitochondria. MDM12 is required for the interaction of the ER-resident membrane protein MMM1 and the outer mitochondrial membrane-resident beta-barrel protein MDM10. The MDM12-MMM1 subcomplex functions in the major beta-barrel assembly pathway that is responsible for biogenesis of all mitochondrial outer membrane beta-barrel proteins, and acts in a late step after the SAM complex. The MDM10-MDM12-MMM1 subcomplex further acts in the TOM40-specific pathway after the action of the MDM12-MMM1 complex. Essential for establishing and maintaining the structure of mitochondria and maintenance of mtDNA nucleoids. This chain is Mitochondrial distribution and morphology protein 12, found in Blastomyces gilchristii (strain SLH14081) (Blastomyces dermatitidis).